Here is a 116-residue protein sequence, read N- to C-terminus: MRVKTGIIRRKRHKRVLKAAKGFRGASGDAFKQAKQATRRAMAFATRDRKVNKRRMRQLWITRINSAARMNGVSYSVLMNGLKKAGILLDRKVLADIALNNATEFTKLVEAAKSAL.

It belongs to the bacterial ribosomal protein bL20 family.

Binds directly to 23S ribosomal RNA and is necessary for the in vitro assembly process of the 50S ribosomal subunit. It is not involved in the protein synthesizing functions of that subunit. This chain is Large ribosomal subunit protein bL20, found in Fusobacterium nucleatum subsp. nucleatum (strain ATCC 25586 / DSM 15643 / BCRC 10681 / CIP 101130 / JCM 8532 / KCTC 2640 / LMG 13131 / VPI 4355).